A 1051-amino-acid chain; its full sequence is Carbamoyl phosphate synthase large chain (1051 aa).

The tract at residues 1–399 (MRETPKKVLV…SLQKAIRMLD (399 aa)) is carboxyphosphate synthetic domain. Residues Arg127, Arg167, Gly173, Gly174, Lys206, Leu208, Glu213, Gly239, Val240, His241, Gln282, and Glu296 each contribute to the ATP site. The region spanning 131–325 (RETMIENNLP…LAYVSAKLAL (195 aa)) is the ATP-grasp 1 domain. Mg(2+)-binding residues include Gln282, Glu296, and Asn298. Gln282, Glu296, and Asn298 together coordinate Mn(2+). An oligomerization domain region spans residues 400–548 (IGEPGVVGGK…LTYNGTEDDI (149 aa)). The tract at residues 549–930 (EFSQGNKLLI…LKSWLSSMPN (382 aa)) is carbamoyl phosphate synthetic domain. Residues 673 to 863 (SKLLDKLGIS…LINESMKAIF (191 aa)) enclose the ATP-grasp 2 domain. Arg709, Lys748, Ile750, Glu755, Gly779, Val780, His781, Ser782, Gln822, and Glu834 together coordinate ATP. Positions 822, 834, and 836 each coordinate Mg(2+). Mn(2+) is bound by residues Gln822, Glu834, and Asn836. Residues 930-1051 (NRIPNKNGIA…FEISEYGGGI (122 aa)) form the MGS-like domain. Residues 931–1051 (RIPNKNGIAL…FEISEYGGGI (121 aa)) are allosteric domain.

Belongs to the CarB family. In terms of assembly, composed of two chains; the small (or glutamine) chain promotes the hydrolysis of glutamine to ammonia, which is used by the large (or ammonia) chain to synthesize carbamoyl phosphate. Tetramer of heterodimers (alpha,beta)4. It depends on Mg(2+) as a cofactor. Requires Mn(2+) as cofactor.

The catalysed reaction is hydrogencarbonate + L-glutamine + 2 ATP + H2O = carbamoyl phosphate + L-glutamate + 2 ADP + phosphate + 2 H(+). The enzyme catalyses hydrogencarbonate + NH4(+) + 2 ATP = carbamoyl phosphate + 2 ADP + phosphate + 2 H(+). Its pathway is amino-acid biosynthesis; L-arginine biosynthesis; carbamoyl phosphate from bicarbonate: step 1/1. It functions in the pathway pyrimidine metabolism; UMP biosynthesis via de novo pathway; (S)-dihydroorotate from bicarbonate: step 1/3. In terms of biological role, large subunit of the glutamine-dependent carbamoyl phosphate synthetase (CPSase). CPSase catalyzes the formation of carbamoyl phosphate from the ammonia moiety of glutamine, carbonate, and phosphate donated by ATP, constituting the first step of 2 biosynthetic pathways, one leading to arginine and/or urea and the other to pyrimidine nucleotides. The large subunit (synthetase) binds the substrates ammonia (free or transferred from glutamine from the small subunit), hydrogencarbonate and ATP and carries out an ATP-coupled ligase reaction, activating hydrogencarbonate by forming carboxy phosphate which reacts with ammonia to form carbamoyl phosphate. The chain is Carbamoyl phosphate synthase large chain from Saccharolobus solfataricus (strain ATCC 35092 / DSM 1617 / JCM 11322 / P2) (Sulfolobus solfataricus).